Consider the following 462-residue polypeptide: Glycine--tRNA ligase (462 aa).

Positions 100 and 174 each coordinate substrate. ATP-binding positions include 206–208, 216–221, 290–291, and 334–337; these read RNE, FRTREF, EL, and GADR. Residue 221–225 coordinates substrate; it reads FEQME. 330 to 334 provides a ligand contact to substrate; the sequence is EPSLG.

This sequence belongs to the class-II aminoacyl-tRNA synthetase family. Homodimer.

The protein resides in the cytoplasm. It catalyses the reaction tRNA(Gly) + glycine + ATP = glycyl-tRNA(Gly) + AMP + diphosphate. In terms of biological role, catalyzes the attachment of glycine to tRNA(Gly). In Alkaliphilus metalliredigens (strain QYMF), this protein is Glycine--tRNA ligase.